Reading from the N-terminus, the 419-residue chain is Cell division protein FtsZ (419 aa).

Residues 22 to 26 (GGGGN), 109 to 111 (GSG), glutamate 140, arginine 144, and aspartate 188 contribute to the GTP site. Positions 397–419 (ERFEAPISQDEDELDTPPFFKNR) are disordered.

Belongs to the FtsZ family. As to quaternary structure, homodimer. Polymerizes to form a dynamic ring structure in a strictly GTP-dependent manner. Interacts directly with several other division proteins. Interacts with CcrZ; the interaction is direct.

The protein localises to the cytoplasm. In terms of biological role, essential cell division protein that forms a contractile ring structure (Z ring) at the future cell division site. The regulation of the ring assembly controls the timing and the location of cell division. One of the functions of the FtsZ ring is to recruit other cell division proteins to the septum to produce a new cell wall between the dividing cells. Binds GTP and shows GTPase activity. The sequence is that of Cell division protein FtsZ from Streptococcus pneumoniae serotype 2 (strain D39 / NCTC 7466).